We begin with the raw amino-acid sequence, 160 residues long: MAVTKKPDLSDPQLRAKLAKGMGHNYYGEPAWPNDIFYMFPVVIFGTFAGVIGLAVLDPAAIGEPANPFATPLEILPEWYFYPVFQLLRTVPNKLLGVLLMAAVPAGLITVPFIKIYNKFQNPFRRPVATTVFLVGTVAAIWLGIGAALPIDISLTLGLF.

Helical transmembrane passes span 36–56, 96–116, and 131–151; these read IFYMFPVVIFGTFAGVIGLAV, LGVLLMAAVPAGLITVPFIKI, and TVFLVGTVAAIWLGIGAALPI.

This sequence belongs to the cytochrome b family. PetD subfamily. As to quaternary structure, the 4 large subunits of the cytochrome b6-f complex are cytochrome b6, subunit IV (17 kDa polypeptide, petD), cytochrome f and the Rieske protein, while the 4 small subunits are petG, petL, petM and petN. The complex functions as a dimer.

Its subcellular location is the plastid. It localises to the chloroplast thylakoid membrane. Its function is as follows. Component of the cytochrome b6-f complex, which mediates electron transfer between photosystem II (PSII) and photosystem I (PSI), cyclic electron flow around PSI, and state transitions. The polypeptide is Cytochrome b6-f complex subunit 4 (Auxenochlorella protothecoides (Green microalga)).